A 240-amino-acid polypeptide reads, in one-letter code: 4-hydroxy-tetrahydrodipicolinate reductase (240 aa).

Residues 8 to 13 (GSTGKM), 78 to 80 (GTT), and 102 to 105 (SANM) each bind NAD(+). Residue H134 is the Proton donor/acceptor of the active site. H135 is a binding site for (S)-2,3,4,5-tetrahydrodipicolinate. Catalysis depends on K138, which acts as the Proton donor. 144–145 (GT) provides a ligand contact to (S)-2,3,4,5-tetrahydrodipicolinate.

It belongs to the DapB family.

It localises to the cytoplasm. It catalyses the reaction (S)-2,3,4,5-tetrahydrodipicolinate + NAD(+) + H2O = (2S,4S)-4-hydroxy-2,3,4,5-tetrahydrodipicolinate + NADH + H(+). The catalysed reaction is (S)-2,3,4,5-tetrahydrodipicolinate + NADP(+) + H2O = (2S,4S)-4-hydroxy-2,3,4,5-tetrahydrodipicolinate + NADPH + H(+). Its pathway is amino-acid biosynthesis; L-lysine biosynthesis via DAP pathway; (S)-tetrahydrodipicolinate from L-aspartate: step 4/4. Catalyzes the conversion of 4-hydroxy-tetrahydrodipicolinate (HTPA) to tetrahydrodipicolinate. This is 4-hydroxy-tetrahydrodipicolinate reductase from Rickettsia canadensis (strain McKiel).